The sequence spans 195 residues: ATP-dependent Clp protease proteolytic subunit (195 aa).

The Nucleophile role is filled by Ser-98. His-123 is an active-site residue.

Belongs to the peptidase S14 family. In terms of assembly, fourteen ClpP subunits assemble into 2 heptameric rings which stack back to back to give a disk-like structure with a central cavity, resembling the structure of eukaryotic proteasomes.

The protein localises to the cytoplasm. The catalysed reaction is Hydrolysis of proteins to small peptides in the presence of ATP and magnesium. alpha-casein is the usual test substrate. In the absence of ATP, only oligopeptides shorter than five residues are hydrolyzed (such as succinyl-Leu-Tyr-|-NHMec, and Leu-Tyr-Leu-|-Tyr-Trp, in which cleavage of the -Tyr-|-Leu- and -Tyr-|-Trp bonds also occurs).. Its function is as follows. Cleaves peptides in various proteins in a process that requires ATP hydrolysis. Has a chymotrypsin-like activity. Plays a major role in the degradation of misfolded proteins. This is ATP-dependent Clp protease proteolytic subunit from Alkaliphilus oremlandii (strain OhILAs) (Clostridium oremlandii (strain OhILAs)).